Consider the following 226-residue polypeptide: Uracil-DNA glycosylase (226 aa).

Residue Asp-65 is the Proton acceptor of the active site.

This sequence belongs to the uracil-DNA glycosylase (UDG) superfamily. UNG family.

It localises to the cytoplasm. The catalysed reaction is Hydrolyzes single-stranded DNA or mismatched double-stranded DNA and polynucleotides, releasing free uracil.. Functionally, excises uracil residues from the DNA which can arise as a result of misincorporation of dUMP residues by DNA polymerase or due to deamination of cytosine. The chain is Uracil-DNA glycosylase from Bacillus pumilus (strain SAFR-032).